Here is a 540-residue protein sequence, read N- to C-terminus: uncharacterized protein (540 aa).

Residues 1–58 (MAVSAFRGTRLPLFHHSQFPVARTVSGTSKKMIGARNFKGFVLTAQYSQTQDLFTSRL) constitute a chloroplast transit peptide. The region spanning 195 to 533 (YVDPTPIASA…ISIASNKRTN (339 aa)) is the Protein kinase domain. ATP-binding positions include 201 to 209 (IASASIAQV) and K224. The Proton acceptor role is filled by D362.

Belongs to the protein kinase superfamily. ADCK protein kinase family.

The protein localises to the plastid. It is found in the chloroplast. It localises to the plastoglobule. This is an uncharacterized protein from Arabidopsis thaliana (Mouse-ear cress).